Here is a 556-residue protein sequence, read N- to C-terminus: Putative solute carrier family 22 member 31 (556 aa).

The Cytoplasmic segment spans residues 1–23 (MEQEARVLRAAGGFGRARRLLAS). Residues 24–44 (ASWVPCIVLGLVLSSEELLTA) traverse the membrane as a helical segment. Over 45–128 (QPAPHCRPDP…WNLVCGDGWK (84 aa)) the chain is Extracellular. The chain crosses the membrane as a helical span at residues 129–149 (VPLEQVSHLLGWLLGCVILGA). The Cytoplasmic portion of the chain corresponds to 150-157 (GCDRFGRR). A helical membrane pass occupies residues 158–178 (AVFVASLVLTTGLGASEALAA). Topologically, residues 179-182 (SFPT) are extracellular. The chain crosses the membrane as a helical span at residues 183-203 (LLVLRLLHGGTLAGALLALYL). At 204–218 (ARLELCDPPHRLAFS) the chain is on the cytoplasmic side. The helical transmembrane segment at 219–239 (MGAGLFSVVGTLLLPGLAALV) threads the bilayer. Residues 240–246 (QDWRLLQ) are Extracellular-facing. Residues 247–267 (GLGALMSGLLLLFWGFPALFP) traverse the membrane as a helical segment. The Cytoplasmic portion of the chain corresponds to 268–339 (ESPCWLLATG…LRTRVTWRNG (72 aa)). Residues 340 to 357 (LILGFSSLVGGGIRASFR) form a helical membrane-spanning segment. The Extracellular segment spans residues 358–366 (RSLAPQVPT). Residues 367 to 387 (FYLPYFLEAGLEAAALVFLLL) form a helical membrane-spanning segment. At 388–395 (TADCCGRR) the chain is on the cytoplasmic side. Residues 396–416 (PVLLLGTMVTGLASLLLLAGA) form a helical membrane-spanning segment. Residues 417–420 (QYLP) are Extracellular-facing. The helical transmembrane segment at 421–441 (GWTVLFLSVLGLLASRAVSAL) threads the bilayer. The Cytoplasmic segment spans residues 442 to 448 (SSLFAAE). A helical transmembrane segment spans residues 449–469 (VFPTVIRGAGLGLVLGAGFLG). Residues 470–483 (QAAGPLDTLHGRQG) lie on the Extracellular side of the membrane. The helical transmembrane segment at 484-504 (FFLQQVVFASLAVLALLCVLL) threads the bilayer. The Cytoplasmic segment spans residues 505–556 (LPESRSRGLPQSLQDADRLRRSPLLRGRPRQDHLPLLPPSNSYWAGHTPEQH). A disordered region spans residues 524–556 (RRSPLLRGRPRQDHLPLLPPSNSYWAGHTPEQH).

Belongs to the major facilitator (TC 2.A.1) superfamily. Organic cation transporter (TC 2.A.1.19) family.

The protein resides in the membrane. Organic anion transporter that mediates the uptake of ions. This chain is Putative solute carrier family 22 member 31, found in Homo sapiens (Human).